Here is a 159-residue protein sequence, read N- to C-terminus: D-aminoacyl-tRNA deacylase (159 aa).

A Gly-cisPro motif, important for rejection of L-amino acids motif is present at residues glycine 146–proline 147.

This sequence belongs to the DTD family. In terms of assembly, homodimer.

It localises to the cytoplasm. It carries out the reaction glycyl-tRNA(Ala) + H2O = tRNA(Ala) + glycine + H(+). The catalysed reaction is a D-aminoacyl-tRNA + H2O = a tRNA + a D-alpha-amino acid + H(+). Functionally, an aminoacyl-tRNA editing enzyme that deacylates mischarged D-aminoacyl-tRNAs. Also deacylates mischarged glycyl-tRNA(Ala), protecting cells against glycine mischarging by AlaRS. Acts via tRNA-based rather than protein-based catalysis; rejects L-amino acids rather than detecting D-amino acids in the active site. By recycling D-aminoacyl-tRNA to D-amino acids and free tRNA molecules, this enzyme counteracts the toxicity associated with the formation of D-aminoacyl-tRNA entities in vivo and helps enforce protein L-homochirality. This Bifidobacterium adolescentis (strain ATCC 15703 / DSM 20083 / NCTC 11814 / E194a) protein is D-aminoacyl-tRNA deacylase.